Here is a 158-residue protein sequence, read N- to C-terminus: Transcriptional repressor NrdR (158 aa).

The tract at residues 1–20 (MRCPSCGSLDTQVKDSRPTE) is disordered. The segment at 3-34 (CPSCGSLDTQVKDSRPTEDSSVIRRRRVCLTC) is a zinc-finger region. The ATP-cone domain maps to 49–139 (LTVIKRNGRR…VYRNFREAKD (91 aa)).

The protein belongs to the NrdR family. The cofactor is Zn(2+).

Negatively regulates transcription of bacterial ribonucleotide reductase nrd genes and operons by binding to NrdR-boxes. The sequence is that of Transcriptional repressor NrdR from Afipia carboxidovorans (strain ATCC 49405 / DSM 1227 / KCTC 32145 / OM5) (Oligotropha carboxidovorans).